Consider the following 419-residue polypeptide: Peroxisomal membrane protein PMP47B (419 aa).

Solcar repeat units follow at residues 6 to 120, 142 to 230, and 239 to 369; these read YDDL…TGKT, LSVW…LKSF, and VTPV…LLIL. Residues 12-32 traverse the membrane as a helical segment; that stretch reads AFAGAGGGLLSMTLTYPLVTL. The span at 44–53 shows a compositional bias: basic and acidic residues; it reads KNEEEEKENS. A disordered region spans residues 44 to 69; sequence KNEEEEKENSNEDGSLSPKSSNTSNI. Residues 56 to 69 are compositionally biased toward polar residues; the sequence is DGSLSPKSSNTSNI. 3 helical membrane passes run 98–118, 204–224, and 245–265; these read SALF…ELTG, FTGI…YTIF, and LLLG…YITL. Residues 274 to 305 are disordered; the sequence is MTENNEDSEKERTDSVQSLPEDGSDEDNSKEN. The next 2 membrane-spanning stretches (helical) occupy residues 310 to 330 and 349 to 369; these read TINK…IIGY and LLQS…LLIL.

Belongs to the mitochondrial carrier (TC 2.A.29) family.

Its subcellular location is the peroxisome membrane. May have transport activity. The sequence is that of Peroxisomal membrane protein PMP47B (PMP47B) from Candida boidinii (Yeast).